The following is a 439-amino-acid chain: C4-dicarboxylate transport protein (439 aa).

The next 9 membrane-spanning stretches (helical) occupy residues 9 to 29 (HLYF…YYMP), 45 to 65 (MIKM…IAGM), 80 to 100 (LYFE…INVI), 150 to 170 (GEIL…SAMG), 186 to 206 (AFFG…FGAM), 221 to 241 (LGML…VVLG), 291 to 311 (VVGL…SIYL), 334 to 354 (ILGV…SGFV), and 357 to 377 (AATF…ILGI).

Belongs to the dicarboxylate/amino acid:cation symporter (DAACS) (TC 2.A.23) family.

It localises to the cell inner membrane. Its function is as follows. Responsible for the transport of dicarboxylates such as succinate, fumarate, and malate from the periplasm across the membrane. In Citrifermentans bemidjiense (strain ATCC BAA-1014 / DSM 16622 / JCM 12645 / Bem) (Geobacter bemidjiensis), this protein is C4-dicarboxylate transport protein.